Consider the following 276-residue polypeptide: NH(3)-dependent NAD(+) synthetase (276 aa).

43-50 (GISGGVDS) contacts ATP. Mg(2+) is bound at residue Asp49. Arg146 contacts deamido-NAD(+). Thr166 serves as a coordination point for ATP. Glu171 serves as a coordination point for Mg(2+). Deamido-NAD(+) is bound by residues Lys179 and Asp186. The ATP site is built by Lys195 and Thr217. 266–267 (HK) lines the deamido-NAD(+) pocket.

This sequence belongs to the NAD synthetase family. Homodimer.

The enzyme catalyses deamido-NAD(+) + NH4(+) + ATP = AMP + diphosphate + NAD(+) + H(+). Its pathway is cofactor biosynthesis; NAD(+) biosynthesis; NAD(+) from deamido-NAD(+) (ammonia route): step 1/1. Functionally, catalyzes the ATP-dependent amidation of deamido-NAD to form NAD. Uses ammonia as a nitrogen source. In Vibrio cholerae serotype O1 (strain ATCC 39541 / Classical Ogawa 395 / O395), this protein is NH(3)-dependent NAD(+) synthetase.